The primary structure comprises 308 residues: Aspartate carbamoyltransferase catalytic subunit (308 aa).

2 residues coordinate carbamoyl phosphate: arginine 55 and threonine 56. Lysine 83 contacts L-aspartate. The carbamoyl phosphate site is built by arginine 105, histidine 133, and glutamine 136. Positions 166 and 220 each coordinate L-aspartate. Glycine 261 and proline 262 together coordinate carbamoyl phosphate.

The protein belongs to the aspartate/ornithine carbamoyltransferase superfamily. ATCase family. In terms of assembly, heterododecamer (2C3:3R2) of six catalytic PyrB chains organized as two trimers (C3), and six regulatory PyrI chains organized as three dimers (R2).

The catalysed reaction is carbamoyl phosphate + L-aspartate = N-carbamoyl-L-aspartate + phosphate + H(+). The protein operates within pyrimidine metabolism; UMP biosynthesis via de novo pathway; (S)-dihydroorotate from bicarbonate: step 2/3. In terms of biological role, catalyzes the condensation of carbamoyl phosphate and aspartate to form carbamoyl aspartate and inorganic phosphate, the committed step in the de novo pyrimidine nucleotide biosynthesis pathway. The protein is Aspartate carbamoyltransferase catalytic subunit of Chlorobium limicola (strain DSM 245 / NBRC 103803 / 6330).